We begin with the raw amino-acid sequence, 50 residues long: Small ribosomal subunit protein eS31 (50 aa).

4 residues coordinate Zn(2+): C22, C25, C40, and C43. The segment at 22–43 adopts a C4-type zinc-finger fold; sequence CPRCGPGVFMADHGDRWACGKC.

This sequence belongs to the eukaryotic ribosomal protein eS31 family. Part of the 30S ribosomal subunit. It depends on Zn(2+) as a cofactor.

This Pyrococcus horikoshii (strain ATCC 700860 / DSM 12428 / JCM 9974 / NBRC 100139 / OT-3) protein is Small ribosomal subunit protein eS31.